We begin with the raw amino-acid sequence, 267 residues long: tRNA pseudouridine synthase A (267 aa).

Catalysis depends on D54, which acts as the Nucleophile. Y112 contacts substrate.

It belongs to the tRNA pseudouridine synthase TruA family. Homodimer.

It catalyses the reaction uridine(38/39/40) in tRNA = pseudouridine(38/39/40) in tRNA. Its function is as follows. Formation of pseudouridine at positions 38, 39 and 40 in the anticodon stem and loop of transfer RNAs. The polypeptide is tRNA pseudouridine synthase A (Bordetella avium (strain 197N)).